A 147-amino-acid polypeptide reads, in one-letter code: Basic phospholipase A2 beta-bungarotoxin A1 chain (147 aa).

A signal peptide spans 1–19 (MNPAHLLVLSAVCVSLLGA). The propeptide occupies 20-27 (ANIPPHPL). 6 disulfide bridges follow: C54-C146, C56-C72, C71-C127, C78-C120, C88-C113, and C106-C118. Residues Y55, G57, and G59 each contribute to the Ca(2+) site. The active site involves H75. D76 is a Ca(2+) binding site. The active site involves D121.

The protein belongs to the phospholipase A2 family. Group I subfamily. D49 sub-subfamily. As to quaternary structure, heterodimer; disulfide-linked. The A chains have phospholipase A2 activity and the B chains show homology with the basic protease inhibitors. The A1 chain is found in beta-1 and beta-2 bungarotoxins. Ca(2+) serves as cofactor. As to expression, expressed by the venom gland.

The protein resides in the secreted. The enzyme catalyses a 1,2-diacyl-sn-glycero-3-phosphocholine + H2O = a 1-acyl-sn-glycero-3-phosphocholine + a fatty acid + H(+). Snake venom phospholipase A2 (PLA2) that inhibits neuromuscular transmission by blocking acetylcholine release from the nerve termini. PLA2 catalyzes the calcium-dependent hydrolysis of the 2-acyl groups in 3-sn-phosphoglycerides. This is Basic phospholipase A2 beta-bungarotoxin A1 chain from Bungarus multicinctus (Many-banded krait).